The sequence spans 661 residues: DNA ligase (661 aa).

NAD(+)-binding positions include 31 to 35 (DSGYD), 80 to 81 (SL), and Glu-109. The active-site N6-AMP-lysine intermediate is Lys-111. Residues Arg-132, Glu-167, Lys-283, and Lys-307 each contribute to the NAD(+) site. Positions 401, 404, 419, and 424 each coordinate Zn(2+). Residues 582-661 (AGEQLLQGKT…AGFLNLLGLS (80 aa)) form the BRCT domain.

It belongs to the NAD-dependent DNA ligase family. LigA subfamily. It depends on Mg(2+) as a cofactor. Mn(2+) serves as cofactor.

The catalysed reaction is NAD(+) + (deoxyribonucleotide)n-3'-hydroxyl + 5'-phospho-(deoxyribonucleotide)m = (deoxyribonucleotide)n+m + AMP + beta-nicotinamide D-nucleotide.. DNA ligase that catalyzes the formation of phosphodiester linkages between 5'-phosphoryl and 3'-hydroxyl groups in double-stranded DNA using NAD as a coenzyme and as the energy source for the reaction. It is essential for DNA replication and repair of damaged DNA. The sequence is that of DNA ligase from Syntrophomonas wolfei subsp. wolfei (strain DSM 2245B / Goettingen).